The primary structure comprises 227 residues: Probable septum site-determining protein MinC (227 aa).

The protein belongs to the MinC family. In terms of assembly, interacts with MinD and FtsZ.

Its function is as follows. Cell division inhibitor that blocks the formation of polar Z ring septums. Rapidly oscillates between the poles of the cell to destabilize FtsZ filaments that have formed before they mature into polar Z rings. Prevents FtsZ polymerization. The protein is Probable septum site-determining protein MinC of Geobacillus kaustophilus (strain HTA426).